The primary structure comprises 554 residues: Probable efflux pump gsfJ (554 aa).

14 helical membrane-spanning segments follow: residues 54 to 74, 93 to 115, 120 to 140, 152 to 172, 181 to 201, 206 to 226, 248 to 268, 279 to 299, 321 to 341, 349 to 369, 379 to 399, 410 to 430, 447 to 467, and 518 to 538; these read LAAV…DNTI, SWYG…GKFY, IKVW…ICAV, AIAG…IGFA, LLGF…LIGG, KCFY…FLLF, LVGA…LQYG, VIGL…WEIY, IYMF…PIYF, PIGS…AAIV, IVPL…GLFY, WVGY…IAMS, IVNF…QCAF, and VFAI…FGSW.

The protein belongs to the major facilitator superfamily.

The protein resides in the membrane. Its function is as follows. Probable efflux pump; part of the gene cluster that mediates the biosynthesis of griseofulvin. In Penicillium aethiopicum, this protein is Probable efflux pump gsfJ.